The primary structure comprises 79 residues: Conotoxin Cl9.4 (79 aa).

An N-terminal signal peptide occupies residues 1–23 (MNCYLILTVALLLTSAMTGTTTA). Positions 24–37 (GQLNKKGVTLREDD) are excised as a propeptide. 3 disulfide bridges follow: Cys41–Cys58, Cys46–Cys68, and Cys48–Cys73.

In terms of tissue distribution, expressed by the venom duct.

The protein localises to the secreted. This Californiconus californicus (California cone) protein is Conotoxin Cl9.4.